Consider the following 580-residue polypeptide: PTS system fructose-specific EIIB'BC component (580 aa).

2 PTS EIIB type-2 domains span residues 3–100 (MKIA…QAAE) and 124–221 (KKIV…NAFA). Catalysis depends on phosphocysteine intermediate; for EIIB activity residues Cys11 and Cys132. Phosphocysteine; by EIIA occurs at positions 11 and 132. A PTS EIIC type-2 domain is found at 244–579 (VYKHLMTGVS…KKSAQAKAVA (336 aa)). 9 helical membrane passes run 254 to 274 (HMLPVVVAGGLIIALSFVFGI), 292 to 312 (GGSAFALMIPVLAGYIAFSIA), 322 to 342 (IGGMLASSTGAGFLGGIVAGF), 367 to 387 (ILIIPFIASLFTGLVMIYVVG), 408 to 428 (NAILLGIVLGAMMCFDLGGPV), 448 to 468 (MAAIMAAGMVPALGMGLATFI), 480 to 500 (AGKASFVLGLCFISEGAIPFA), 507 to 527 (VIPACMVGGAVTGALSMLFGA), and 537 to 557 (FVLLIPNAISPVLLYLVAIAV).

The protein resides in the cell inner membrane. It carries out the reaction D-fructose(out) + N(pros)-phospho-L-histidyl-[protein] = D-fructose 1-phosphate(in) + L-histidyl-[protein]. Functionally, the phosphoenolpyruvate-dependent sugar phosphotransferase system (sugar PTS), a major carbohydrate active transport system, catalyzes the phosphorylation of incoming sugar substrates concomitantly with their translocation across the cell membrane. The enzyme II FruAB PTS system is involved in fructose transport. The chain is PTS system fructose-specific EIIB'BC component from Vibrio cholerae serotype O1 (strain ATCC 39315 / El Tor Inaba N16961).